The primary structure comprises 162 residues: Cyclic pyranopterin monophosphate synthase (162 aa).

Residues 75–77 (LCH) and 113–114 (ME) contribute to the substrate site. Asp-128 is a catalytic residue.

The protein belongs to the MoaC family. Homohexamer; trimer of dimers.

The catalysed reaction is (8S)-3',8-cyclo-7,8-dihydroguanosine 5'-triphosphate = cyclic pyranopterin phosphate + diphosphate. It participates in cofactor biosynthesis; molybdopterin biosynthesis. Functionally, catalyzes the conversion of (8S)-3',8-cyclo-7,8-dihydroguanosine 5'-triphosphate to cyclic pyranopterin monophosphate (cPMP). This Klebsiella pneumoniae (strain 342) protein is Cyclic pyranopterin monophosphate synthase.